Here is a 156-residue protein sequence, read N- to C-terminus: Small ribosomal subunit protein uS7 (156 aa).

The protein belongs to the universal ribosomal protein uS7 family. As to quaternary structure, part of the 30S ribosomal subunit. Contacts proteins S9 and S11.

One of the primary rRNA binding proteins, it binds directly to 16S rRNA where it nucleates assembly of the head domain of the 30S subunit. Is located at the subunit interface close to the decoding center, probably blocks exit of the E-site tRNA. The chain is Small ribosomal subunit protein uS7 from Clostridium kluyveri (strain NBRC 12016).